The chain runs to 906 residues: Protein translocase subunit SecA (906 aa).

ATP is bound by residues Q89, 107–111 (GEGKT), and D502. Positions 868-887 (VPPAQRDPADPRTWGKVSRN) are disordered. C890, C892, C901, and H902 together coordinate Zn(2+).

Belongs to the SecA family. Monomer and homodimer. Part of the essential Sec protein translocation apparatus which comprises SecA, SecYEG and auxiliary proteins SecDF-YajC and YidC. The cofactor is Zn(2+).

It is found in the cell inner membrane. It localises to the cytoplasm. The enzyme catalyses ATP + H2O + cellular proteinSide 1 = ADP + phosphate + cellular proteinSide 2.. Part of the Sec protein translocase complex. Interacts with the SecYEG preprotein conducting channel. Has a central role in coupling the hydrolysis of ATP to the transfer of proteins into and across the cell membrane, serving both as a receptor for the preprotein-SecB complex and as an ATP-driven molecular motor driving the stepwise translocation of polypeptide chains across the membrane. The protein is Protein translocase subunit SecA of Brucella melitensis biotype 1 (strain ATCC 23456 / CCUG 17765 / NCTC 10094 / 16M).